A 227-amino-acid chain; its full sequence is Lectin (227 aa).

The N-terminal stretch at 1-28 (MTMTSTTTKAMAMAAAVLAAAAVAATNA) is a signal peptide. The residue at position 29 (Gln-29) is a Pyrrolidone carboxylic acid. 4 Chitin-binding type-1 domains span residues 29 to 70 (QTCG…ACCS), 71 to 113 (SQRC…PCRA), 114 to 156 (DIKC…ACCP), and 157 to 199 (EKRC…GCYK). Cystine bridges form between Cys-31–Cys-46, Cys-40–Cys-52, Cys-45–Cys-59, Cys-63–Cys-68, Cys-74–Cys-89, Cys-83–Cys-95, Cys-88–Cys-102, Cys-106–Cys-111, Cys-117–Cys-132, Cys-126–Cys-138, Cys-131–Cys-145, Cys-149–Cys-154, Cys-160–Cys-175, Cys-169–Cys-181, Cys-174–Cys-188, and Cys-192–Cys-197. Substrate is bound at residue 38 to 40 (MIC). Residue 90–101 (SQYGYCGFGSEY) coordinates substrate. 142 to 143 (SE) is a binding site for substrate. A propeptide spanning residues 202-227 (DGMAAILANNQSVSFEGIIESVAELV) is cleaved from the precursor. A glycan (N-linked (GlcNAc...) asparagine) is linked at Asn-211.

In terms of biological role, N-acetyl-D-glucosamine binding lectin. In Oryza sativa subsp. indica (Rice), this protein is Lectin.